Consider the following 553-residue polypeptide: Dihydrolipoyllysine-residue acetyltransferase component of pyruvate dehydrogenase complex (553 aa).

In terms of domain architecture, Lipoyl-binding 1 spans 2–77 (AFSVQMPALG…EVGGELAVIG (76 aa)). Lysine 43 bears the N6-lipoyllysine mark. Positions 81 to 125 (DAGEAAAPAPEKVPAAQPESKPAPEPPPVQPTSGAPAGGDAKPVL) are disordered. Over residues 84 to 100 (EAAAPAPEKVPAAQPES) the composition is skewed to low complexity. Residues 101 to 110 (KPAPEPPPVQ) are compositionally biased toward pro residues. In terms of domain architecture, Lipoyl-binding 2 spans 121-196 (AKPVLMPELG…PVGGELARIG (76 aa)). At lysine 162 the chain carries N6-lipoyllysine. 2 disordered regions span residues 204-238 (APAPKPAPKPVPEPAPTPKAEPAPSPPAAQPAGAA) and 278-321 (AAAE…TQKA). The segment covering 206-232 (APKPAPKPVPEPAPTPKAEPAPSPPAA) has biased composition (pro residues). One can recognise a Peripheral subunit-binding (PSBD) domain in the interval 243-280 (YVTPLVRKLASENNIDLAGVTGTGVGGRIRKQDVLAAA). Residues 288-300 (APAPAAQAAAAPA) are compositionally biased toward low complexity. Residues histidine 523 and aspartate 527 contribute to the active site.

It belongs to the 2-oxoacid dehydrogenase family. Forms a 24-polypeptide structural core with octahedral symmetry. Part of the PDH complex, consisting of multiple copies of AceE (E1), DlaT (E2) and Lpd (E3). (R)-lipoate is required as a cofactor.

It catalyses the reaction N(6)-[(R)-dihydrolipoyl]-L-lysyl-[protein] + acetyl-CoA = N(6)-[(R)-S(8)-acetyldihydrolipoyl]-L-lysyl-[protein] + CoA. Functionally, component of the pyruvate dehydrogenase (PDH) complex, that catalyzes the overall conversion of pyruvate to acetyl-CoA and CO(2). The polypeptide is Dihydrolipoyllysine-residue acetyltransferase component of pyruvate dehydrogenase complex (dlaT) (Mycobacterium bovis (strain ATCC BAA-935 / AF2122/97)).